We begin with the raw amino-acid sequence, 362 residues long: Histidinol-phosphate aminotransferase (362 aa).

K211 carries the N6-(pyridoxal phosphate)lysine modification.

This sequence belongs to the class-II pyridoxal-phosphate-dependent aminotransferase family. Histidinol-phosphate aminotransferase subfamily. As to quaternary structure, homodimer. The cofactor is pyridoxal 5'-phosphate.

It catalyses the reaction L-histidinol phosphate + 2-oxoglutarate = 3-(imidazol-4-yl)-2-oxopropyl phosphate + L-glutamate. Its pathway is amino-acid biosynthesis; L-histidine biosynthesis; L-histidine from 5-phospho-alpha-D-ribose 1-diphosphate: step 7/9. This chain is Histidinol-phosphate aminotransferase, found in Serratia proteamaculans (strain 568).